The following is a 201-amino-acid chain: 3-isopropylmalate dehydratase small subunit (201 aa).

It belongs to the LeuD family. LeuD type 1 subfamily. Heterodimer of LeuC and LeuD.

It catalyses the reaction (2R,3S)-3-isopropylmalate = (2S)-2-isopropylmalate. The protein operates within amino-acid biosynthesis; L-leucine biosynthesis; L-leucine from 3-methyl-2-oxobutanoate: step 2/4. Catalyzes the isomerization between 2-isopropylmalate and 3-isopropylmalate, via the formation of 2-isopropylmaleate. In Escherichia coli O45:K1 (strain S88 / ExPEC), this protein is 3-isopropylmalate dehydratase small subunit.